We begin with the raw amino-acid sequence, 435 residues long: Tubulin-like protein TubZ (435 aa).

GTP contacts are provided by residues 25-26 (MG), 124-126 (GTG), Asn185, and Asn209. Residues 403 to 435 (QEEKPKKKKLNFGAEPEAEVADDSQPTKKKLSF) are disordered.

It belongs to the FtsZ family. TubZ subfamily. In terms of assembly, polymerizes to form two-stranded filaments and bundles at higher concentration in the presence of GTP. Binds to the TubR-tubC protein DNA complex.

It is found in the cytoplasm. It carries out the reaction GTP + H2O = GDP + phosphate + H(+). With respect to regulation, GTPase inhibited by GTP-gamma-S, which also stabilizes filaments. Its function is as follows. A tubulin-like, filament forming GTPase; the motor component of the type III plasmid partition system which ensures correct segregation of the pXO1 plasmid. Essential for plasmid replication. The filaments seed from a DNA centromere-like site (tubC)-TubR complex which extends to surround the TubZ filaments. Highly dynamic filaments grow at the plus end and depolymerize at the minus end, a process called treadmilling. TubR-tubC complexes track the depolymerizing minus end of the filament, probably pulling plasmid within the cell. Has a high GTPase activity; in the presence of GTP assembles into dynamic filaments which bind almost exclusively GDP. Filament formation is cooperative, requiring a critical concentration. Formation occurs very quickly and is followed by disassembly as GTP is consumed. Small amounts of GTP-gamma-S stabilize filaments. Has high GTP and dGTPase activity, 6-fold lower ATPase activity. Forms filaments in the presence of ATP that also disassemble. Weakly binds DNA in a GTP-dependent, non-sequence-specific manner; GTP hydrolysis is not required for DNA-binding. This Bacillus anthracis protein is Tubulin-like protein TubZ.